We begin with the raw amino-acid sequence, 187 residues long: Large ribosomal subunit protein uL5 (187 aa).

It belongs to the universal ribosomal protein uL5 family. Part of the 50S ribosomal subunit; part of the 5S rRNA/L5/L18/L25 subcomplex. Contacts the 5S rRNA and the P site tRNA. Forms a bridge to the 30S subunit in the 70S ribosome.

Its function is as follows. This is one of the proteins that bind and probably mediate the attachment of the 5S RNA into the large ribosomal subunit, where it forms part of the central protuberance. In the 70S ribosome it contacts protein S13 of the 30S subunit (bridge B1b), connecting the 2 subunits; this bridge is implicated in subunit movement. Contacts the P site tRNA; the 5S rRNA and some of its associated proteins might help stabilize positioning of ribosome-bound tRNAs. The protein is Large ribosomal subunit protein uL5 of Malacoplasma penetrans (strain HF-2) (Mycoplasma penetrans).